The following is a 308-amino-acid chain: MFDPETLRTFIAVAETGSFSKAAERLCKTTATISYRIKLLEENTGVALFFRTTRSVTLTAAGEHLLSQARDWLSWLESMPSELQQVNDGVERQVNIVINNLLYNPQAVAQLLAWLNERYPFTQFHISRQIYMGVWDSLLYEGFSLAIGVTGTEALANTFSLDPLGSVQWRFVMAADHPLANVEEPLTEAQLRRFPAVNIEDSARTLTKRVAWRLPGQKEIIVPDMETKIAAHLAGVGIGFLPKSLCQSMIDNQQLVSRVIPTMRPPSPLSLAWRKFGSGKAVEDIVTLFTQRRPEISGFLEIFGNPRS.

Positions 2–59 (FDPETLRTFIAVAETGSFSKAAERLCKTTATISYRIKLLEENTGVALFFRTTRSVTLT) constitute an HTH lysR-type domain. The H-T-H motif DNA-binding region spans 19 to 38 (FSKAAERLCKTTATISYRIK).

This sequence belongs to the LysR transcriptional regulatory family.

Positive regulator essential for the expression of AllD operon. Binds to the AllD promoter. This chain is HTH-type transcriptional activator AllS (allS), found in Escherichia coli O157:H7.